Consider the following 221-residue polypeptide: MNKEQRWKSFFEKEKAQKYFKDELWPFLENEYKNKIIFPKKEDIFKAFDLVDFNNLKVVIIGQDPYINENQAHGLAFSTLDFLLPKSLKNIFIELKNNYPNVVLKSGNLTSWASQGILLLNRVLSVEKGLSSSHYNRGWEIFTFNVIDYISKNFENIIFVLWGKKAQDLKKDINFKNHFILESSHPSPFSANISFFGSQIFLKINKILEQINKEKINWNIE.

Catalysis depends on aspartate 64, which acts as the Proton acceptor.

The protein belongs to the uracil-DNA glycosylase (UDG) superfamily. UNG family.

The protein resides in the cytoplasm. It carries out the reaction Hydrolyzes single-stranded DNA or mismatched double-stranded DNA and polynucleotides, releasing free uracil.. In terms of biological role, excises uracil residues from the DNA which can arise as a result of misincorporation of dUMP residues by DNA polymerase or due to deamination of cytosine. The sequence is that of Uracil-DNA glycosylase from Mycoplasmopsis pulmonis (strain UAB CTIP) (Mycoplasma pulmonis).